The following is a 271-amino-acid chain: Elongation factor Ts (271 aa).

The segment at 76–79 is involved in Mg(2+) ion dislocation from EF-Tu; it reads TDFV.

The protein belongs to the EF-Ts family.

The protein resides in the cytoplasm. Associates with the EF-Tu.GDP complex and induces the exchange of GDP to GTP. It remains bound to the aminoacyl-tRNA.EF-Tu.GTP complex up to the GTP hydrolysis stage on the ribosome. The sequence is that of Elongation factor Ts from Saccharopolyspora erythraea (strain ATCC 11635 / DSM 40517 / JCM 4748 / NBRC 13426 / NCIMB 8594 / NRRL 2338).